Reading from the N-terminus, the 73-residue chain is Putative membrane protein insertion efficiency factor (73 aa).

It belongs to the UPF0161 family.

The protein localises to the cell inner membrane. Its function is as follows. Could be involved in insertion of integral membrane proteins into the membrane. The polypeptide is Putative membrane protein insertion efficiency factor (Bacteroides fragilis (strain ATCC 25285 / DSM 2151 / CCUG 4856 / JCM 11019 / LMG 10263 / NCTC 9343 / Onslow / VPI 2553 / EN-2)).